The following is a 477-amino-acid chain: Aspartyl/glutamyl-tRNA(Asn/Gln) amidotransferase subunit B (477 aa).

It belongs to the GatB/GatE family. GatB subfamily. In terms of assembly, heterotrimer of A, B and C subunits.

The enzyme catalyses L-glutamyl-tRNA(Gln) + L-glutamine + ATP + H2O = L-glutaminyl-tRNA(Gln) + L-glutamate + ADP + phosphate + H(+). It carries out the reaction L-aspartyl-tRNA(Asn) + L-glutamine + ATP + H2O = L-asparaginyl-tRNA(Asn) + L-glutamate + ADP + phosphate + 2 H(+). In terms of biological role, allows the formation of correctly charged Asn-tRNA(Asn) or Gln-tRNA(Gln) through the transamidation of misacylated Asp-tRNA(Asn) or Glu-tRNA(Gln) in organisms which lack either or both of asparaginyl-tRNA or glutaminyl-tRNA synthetases. The reaction takes place in the presence of glutamine and ATP through an activated phospho-Asp-tRNA(Asn) or phospho-Glu-tRNA(Gln). The sequence is that of Aspartyl/glutamyl-tRNA(Asn/Gln) amidotransferase subunit B from Streptococcus sanguinis (strain SK36).